The primary structure comprises 311 residues: Cytosolic Fe-S cluster assembly factor Nubp1 homolog (311 aa).

The [4Fe-4S] cluster site is built by cysteine 9, cysteine 23, cysteine 26, and cysteine 32. 63–70 contacts ATP; the sequence is GKGGVGKS. Positions 240 and 243 each coordinate [4Fe-4S] cluster.

Belongs to the Mrp/NBP35 ATP-binding proteins family. NUBP1/NBP35 subfamily. Heterotetramer of 2 Nubp1 and 2 Nubp2 chains. The cofactor is [4Fe-4S] cluster.

It localises to the cytoplasm. Functionally, component of the cytosolic iron-sulfur (Fe/S) protein assembly (CIA) machinery. Required for maturation of extramitochondrial Fe-S proteins. The Nubp1-Nubp2 heterotetramer forms a Fe-S scaffold complex, mediating the de novo assembly of an Fe-S cluster and its transfer to target apoproteins. The chain is Cytosolic Fe-S cluster assembly factor Nubp1 homolog from Drosophila yakuba (Fruit fly).